Consider the following 146-residue polypeptide: Large ribosomal subunit protein uL15 (146 aa).

Positions 1-39 (MTLKLHNLRPAPGAKTAKTRVGRGEGSKGKTAGRGTKGT) are disordered.

This sequence belongs to the universal ribosomal protein uL15 family. Part of the 50S ribosomal subunit.

In terms of biological role, binds to the 23S rRNA. The polypeptide is Large ribosomal subunit protein uL15 (Nocardioides sp. (strain ATCC BAA-499 / JS614)).